We begin with the raw amino-acid sequence, 349 residues long: 1-acylglycerol-3-phosphate O-acyltransferase ABHD5 (349 aa).

At alanine 2 the chain carries N-acetylalanine. The region spanning 77-185 (PLVLLHGFGG…VEPWGFPERP (109 aa)) is the AB hydrolase-1 domain. The HXXXXD motif motif lies at 327 to 332 (HYVYAD).

The protein belongs to the peptidase S33 family. ABHD4/ABHD5 subfamily. Interacts with ADRP, PLIN and PNPLA2. Interacts with PLIN5; promotes interaction with PNPLA2.

The protein resides in the cytoplasm. Its subcellular location is the lipid droplet. It catalyses the reaction a 1-acyl-sn-glycero-3-phosphate + an acyl-CoA = a 1,2-diacyl-sn-glycero-3-phosphate + CoA. The enzyme catalyses 1-(9Z-octadecenoyl)-sn-glycero-3-phosphate + (9Z)-octadecenoyl-CoA = 1,2-di-(9Z-octadecenoyl)-sn-glycero-3-phosphate + CoA. The catalysed reaction is 1-(9Z-octadecenoyl)-sn-glycero-3-phosphate + hexadecanoyl-CoA = 1-(9Z)-octadecenoyl-2-hexadecanoyl-sn-glycero-3-phosphate + CoA. It carries out the reaction 1-(9Z-octadecenoyl)-sn-glycero-3-phosphate + octadecanoyl-CoA = 1-(9Z-octadecenoyl)-2-octadecanoyl-sn-glycero-3-phosphate + CoA. It catalyses the reaction 1-(9Z-octadecenoyl)-sn-glycero-3-phosphate + (5Z,8Z,11Z,14Z)-eicosatetraenoyl-CoA = 1-(9Z)-octadecenoyl-2-(5Z,8Z,11Z,14Z)-eicosatetraenoyl-sn-glycero-3-phosphate + CoA. The enzyme catalyses eicosanoyl-CoA + 1-(9Z-octadecenoyl)-sn-glycero-3-phosphate = 1-(9Z)-octadecenoyl-2-eicosanoyl-sn-glycero-3-phosphate + CoA. The catalysed reaction is 1-hexadecanoyl-sn-glycero-3-phosphate + (9Z)-octadecenoyl-CoA = 1-hexadecanoyl-2-(9Z-octadecenoyl)-sn-glycero-3-phosphate + CoA. It carries out the reaction 1-octadecanoyl-sn-glycero-3-phosphate + (9Z)-octadecenoyl-CoA = 1-octadecanoyl-2-(9Z-octadecenoyl)-sn-glycero-3-phosphate + CoA. It catalyses the reaction 1-(5Z,8Z,11Z,14Z-eicosatetraenoyl)-sn-glycero-3-phosphate + (9Z)-octadecenoyl-CoA = 1-(5Z,8Z,11Z,14Z)-eicosatetraenoyl-2-(9Z)-octadecenoyl-sn-glycero-3-phosphate + CoA. Acyltransferase activity is inhibited by detergents such as Triton X-100 and 3-[(3-cholamidopropyl)dimethylammonio]-1-propanesulfonate (CHAPS). Acyltransferase activity is inhibited by the presence of magnesium and calcium. Its function is as follows. Coenzyme A-dependent lysophosphatidic acid acyltransferase that catalyzes the transfer of an acyl group on a lysophosphatidic acid. Functions preferentially with 1-oleoyl-lysophosphatidic acid followed by 1-palmitoyl-lysophosphatidic acid, 1-stearoyl-lysophosphatidic acid and 1-arachidonoyl-lysophosphatidic acid as lipid acceptor. Functions preferentially with arachidonoyl-CoA followed by oleoyl-CoA as acyl group donors. Functions in phosphatidic acid biosynthesis. May regulate the cellular storage of triacylglycerol through activation of the phospholipase PNPLA2. Involved in keratinocyte differentiation. Regulates lipid droplet fusion. The chain is 1-acylglycerol-3-phosphate O-acyltransferase ABHD5 from Sus scrofa (Pig).